A 163-amino-acid polypeptide reads, in one-letter code: MGITKKPDLNDPVLRAKLAKGMGHNYYGEPAWPNDLLYIFPVVILGTIACNVGLAVLEPSMIGEPADPFATPLEILPEWYFFPVFQILRTVPNKLLGVLLMVSVPTGLLTVPFLENVNKFQNPFRRPVATTVFLIGTAVALWLGIGATLPIDKSLTLGLFQID.

The next 3 helical transmembrane spans lie at 36–56, 95–115, and 131–151; these read LLYI…GLAV, LLGV…PFLE, and TVFL…TLPI.

Belongs to the cytochrome b family. PetD subfamily. As to quaternary structure, the 4 large subunits of the cytochrome b6-f complex are cytochrome b6, subunit IV (17 kDa polypeptide, petD), cytochrome f and the Rieske protein, while the 4 small subunits are petG, petL, petM and petN. The complex functions as a dimer.

It localises to the plastid. The protein resides in the chloroplast thylakoid membrane. Its function is as follows. Component of the cytochrome b6-f complex, which mediates electron transfer between photosystem II (PSII) and photosystem I (PSI), cyclic electron flow around PSI, and state transitions. This chain is Cytochrome b6-f complex subunit 4, found in Drimys granadensis.